The chain runs to 336 residues: Biotin synthase (336 aa).

In terms of domain architecture, Radical SAM core spans 48-277 (VFGDEVEFCS…QAELRLCGGR (230 aa)). Positions 66, 70, and 73 each coordinate [4Fe-4S] cluster. [2Fe-2S] cluster is bound by residues cysteine 110, cysteine 142, cysteine 202, and arginine 272.

It belongs to the radical SAM superfamily. Biotin synthase family. In terms of assembly, homodimer. The cofactor is [4Fe-4S] cluster. [2Fe-2S] cluster serves as cofactor.

It catalyses the reaction (4R,5S)-dethiobiotin + (sulfur carrier)-SH + 2 reduced [2Fe-2S]-[ferredoxin] + 2 S-adenosyl-L-methionine = (sulfur carrier)-H + biotin + 2 5'-deoxyadenosine + 2 L-methionine + 2 oxidized [2Fe-2S]-[ferredoxin]. It participates in cofactor biosynthesis; biotin biosynthesis; biotin from 7,8-diaminononanoate: step 2/2. Catalyzes the conversion of dethiobiotin (DTB) to biotin by the insertion of a sulfur atom into dethiobiotin via a radical-based mechanism. In Persephonella marina (strain DSM 14350 / EX-H1), this protein is Biotin synthase.